Here is a 119-residue protein sequence, read N- to C-terminus: MARSVVVALLVLLSLSGLEAIQHAPKIQVYSRHPAENGKPNFLNCYVSGFHPSDIEVDLLKNGKKIEKVEHSDLSFSKDWSFYLLYYTEFTPNEKDEYACRVSHVTFPTPKTVKWDRTM.

The first 20 residues, 1 to 20 (MARSVVVALLVLLSLSGLEA), serve as a signal peptide directing secretion. The region spanning 25 to 114 (PKIQVYSRHP…VTFPTPKTVK (90 aa)) is the Ig-like C1-type domain. The cysteines at positions 45 and 100 are disulfide-linked.

This sequence belongs to the beta-2-microglobulin family. As to quaternary structure, heterodimer of an alpha chain and a beta chain. Beta-2-microglobulin is the beta-chain of major histocompatibility complex class I molecules.

The protein resides in the secreted. Functionally, component of the class I major histocompatibility complex (MHC). Involved in the presentation of peptide antigens to the immune system. The chain is Beta-2-microglobulin (B2M) from Lagothrix lagotricha (Brown woolly monkey).